A 420-amino-acid chain; its full sequence is UDP-N-acetylglucosamine 1-carboxyvinyltransferase (420 aa).

Residue 22-23 (KN) coordinates phosphoenolpyruvate. Arginine 92 provides a ligand contact to UDP-N-acetyl-alpha-D-glucosamine. Catalysis depends on cysteine 116, which acts as the Proton donor. Cysteine 116 carries the post-translational modification 2-(S-cysteinyl)pyruvic acid O-phosphothioketal. UDP-N-acetyl-alpha-D-glucosamine-binding positions include 121 to 125 (RPVDQ), aspartate 304, and isoleucine 326.

Belongs to the EPSP synthase family. MurA subfamily.

Its subcellular location is the cytoplasm. The catalysed reaction is phosphoenolpyruvate + UDP-N-acetyl-alpha-D-glucosamine = UDP-N-acetyl-3-O-(1-carboxyvinyl)-alpha-D-glucosamine + phosphate. Its pathway is cell wall biogenesis; peptidoglycan biosynthesis. In terms of biological role, cell wall formation. Adds enolpyruvyl to UDP-N-acetylglucosamine. This chain is UDP-N-acetylglucosamine 1-carboxyvinyltransferase, found in Paraburkholderia phymatum (strain DSM 17167 / CIP 108236 / LMG 21445 / STM815) (Burkholderia phymatum).